The primary structure comprises 530 residues: Type 2 DNA topoisomerase 6 subunit B (530 aa).

ATP is bound by residues asparagine 42, aspartate 76, 97–98, 106–113, and lysine 427; these read SK and GMYGLGVK.

The protein belongs to the TOP6B family. In terms of assembly, homodimer. Heterotetramer of two Top6A and two Top6B chains.

It catalyses the reaction ATP-dependent breakage, passage and rejoining of double-stranded DNA.. Its function is as follows. Relaxes both positive and negative superturns and exhibits a strong decatenase activity. This chain is Type 2 DNA topoisomerase 6 subunit B, found in Saccharolobus solfataricus (strain ATCC 35092 / DSM 1617 / JCM 11322 / P2) (Sulfolobus solfataricus).